Here is a 254-residue protein sequence, read N- to C-terminus: Triosephosphate isomerase (254 aa).

10–12 (NWK) contacts substrate. Histidine 96 serves as the catalytic Electrophile. Catalysis depends on glutamate 168, which acts as the Proton acceptor. Residues glycine 174, serine 214, and 235-236 (GG) contribute to the substrate site.

It belongs to the triosephosphate isomerase family. Homodimer.

It is found in the cytoplasm. It catalyses the reaction D-glyceraldehyde 3-phosphate = dihydroxyacetone phosphate. It participates in carbohydrate biosynthesis; gluconeogenesis. The protein operates within carbohydrate degradation; glycolysis; D-glyceraldehyde 3-phosphate from glycerone phosphate: step 1/1. Its function is as follows. Involved in the gluconeogenesis. Catalyzes stereospecifically the conversion of dihydroxyacetone phosphate (DHAP) to D-glyceraldehyde-3-phosphate (G3P). In Rhodopirellula baltica (strain DSM 10527 / NCIMB 13988 / SH1), this protein is Triosephosphate isomerase.